The following is a 596-amino-acid chain: Elongation factor 4 (596 aa).

Residues 2–183 enclose the tr-type G domain; it reads ENIRNFCIIA…AIIQRIPPPK (182 aa). GTP-binding positions include 14–19 and 130–133; these read DHGKST and NKID.

Belongs to the TRAFAC class translation factor GTPase superfamily. Classic translation factor GTPase family. LepA subfamily.

The protein localises to the cell inner membrane. The catalysed reaction is GTP + H2O = GDP + phosphate + H(+). Functionally, required for accurate and efficient protein synthesis under certain stress conditions. May act as a fidelity factor of the translation reaction, by catalyzing a one-codon backward translocation of tRNAs on improperly translocated ribosomes. Back-translocation proceeds from a post-translocation (POST) complex to a pre-translocation (PRE) complex, thus giving elongation factor G a second chance to translocate the tRNAs correctly. Binds to ribosomes in a GTP-dependent manner. This is Elongation factor 4 from Cytophaga hutchinsonii (strain ATCC 33406 / DSM 1761 / CIP 103989 / NBRC 15051 / NCIMB 9469 / D465).